The chain runs to 198 residues: Pyridoxal 5'-phosphate synthase subunit PdxT (198 aa).

52–54 (GES) is a binding site for L-glutamine. Catalysis depends on Cys-84, which acts as the Nucleophile. L-glutamine is bound by residues Arg-115 and 142–143 (IR). Catalysis depends on charge relay system residues His-178 and Glu-180.

Belongs to the glutaminase PdxT/SNO family. As to quaternary structure, in the presence of PdxS, forms a dodecamer of heterodimers. Only shows activity in the heterodimer.

It catalyses the reaction aldehydo-D-ribose 5-phosphate + D-glyceraldehyde 3-phosphate + L-glutamine = pyridoxal 5'-phosphate + L-glutamate + phosphate + 3 H2O + H(+). The catalysed reaction is L-glutamine + H2O = L-glutamate + NH4(+). It functions in the pathway cofactor biosynthesis; pyridoxal 5'-phosphate biosynthesis. In terms of biological role, catalyzes the hydrolysis of glutamine to glutamate and ammonia as part of the biosynthesis of pyridoxal 5'-phosphate. The resulting ammonia molecule is channeled to the active site of PdxS. This Archaeoglobus fulgidus (strain ATCC 49558 / DSM 4304 / JCM 9628 / NBRC 100126 / VC-16) protein is Pyridoxal 5'-phosphate synthase subunit PdxT.